Consider the following 78-residue polypeptide: Acyl carrier protein (78 aa).

The 75-residue stretch at 4-78 (AQIKEKVYDI…QQAIDYIVKK (75 aa)) folds into the Carrier domain. Serine 39 carries the post-translational modification O-(pantetheine 4'-phosphoryl)serine.

This sequence belongs to the acyl carrier protein (ACP) family. Post-translationally, 4'-phosphopantetheine is transferred from CoA to a specific serine of apo-ACP by AcpS. This modification is essential for activity because fatty acids are bound in thioester linkage to the sulfhydryl of the prosthetic group.

Its subcellular location is the cytoplasm. It functions in the pathway lipid metabolism; fatty acid biosynthesis. Functionally, carrier of the growing fatty acid chain in fatty acid biosynthesis. This chain is Acyl carrier protein, found in Chlorobium phaeobacteroides (strain DSM 266 / SMG 266 / 2430).